The chain runs to 274 residues: 4-hydroxy-tetrahydrodipicolinate reductase (274 aa).

Gly7–Met12 contributes to the NAD(+) binding site. Arg40 contacts NADP(+). NAD(+) contacts are provided by residues Gly103–Thr105 and Ser127–Phe130. Catalysis depends on His160, which acts as the Proton donor/acceptor. Residue His161 participates in (S)-2,3,4,5-tetrahydrodipicolinate binding. Residue Lys164 is the Proton donor of the active site. Gly170 to Thr171 serves as a coordination point for (S)-2,3,4,5-tetrahydrodipicolinate.

It belongs to the DapB family. In terms of assembly, homotetramer.

It localises to the cytoplasm. The enzyme catalyses (S)-2,3,4,5-tetrahydrodipicolinate + NAD(+) + H2O = (2S,4S)-4-hydroxy-2,3,4,5-tetrahydrodipicolinate + NADH + H(+). It carries out the reaction (S)-2,3,4,5-tetrahydrodipicolinate + NADP(+) + H2O = (2S,4S)-4-hydroxy-2,3,4,5-tetrahydrodipicolinate + NADPH + H(+). It participates in amino-acid biosynthesis; L-lysine biosynthesis via DAP pathway; (S)-tetrahydrodipicolinate from L-aspartate: step 4/4. Its function is as follows. Catalyzes the conversion of 4-hydroxy-tetrahydrodipicolinate (HTPA) to tetrahydrodipicolinate. The polypeptide is 4-hydroxy-tetrahydrodipicolinate reductase (Blochmanniella floridana).